A 256-amino-acid chain; its full sequence is Acetyl-coenzyme A carboxylase carboxyl transferase subunit alpha (256 aa).

The CoA carboxyltransferase C-terminal domain occupies 1–236; the sequence is MTDVARILKE…KLHLIDEITQ (236 aa).

This sequence belongs to the AccA family. Acetyl-CoA carboxylase is a heterohexamer composed of biotin carboxyl carrier protein (AccB), biotin carboxylase (AccC) and two subunits each of ACCase subunit alpha (AccA) and ACCase subunit beta (AccD).

It is found in the cytoplasm. The catalysed reaction is N(6)-carboxybiotinyl-L-lysyl-[protein] + acetyl-CoA = N(6)-biotinyl-L-lysyl-[protein] + malonyl-CoA. It participates in lipid metabolism; malonyl-CoA biosynthesis; malonyl-CoA from acetyl-CoA: step 1/1. Its function is as follows. Component of the acetyl coenzyme A carboxylase (ACC) complex. First, biotin carboxylase catalyzes the carboxylation of biotin on its carrier protein (BCCP) and then the CO(2) group is transferred by the carboxyltransferase to acetyl-CoA to form malonyl-CoA. This Streptococcus equi subsp. zooepidemicus (strain H70) protein is Acetyl-coenzyme A carboxylase carboxyl transferase subunit alpha.